The chain runs to 542 residues: Polysialoglycoprotein (542 aa).

An N-terminal signal peptide occupies residues 1-21; the sequence is MIMGGVRELLLVVMTVGVVKV. Residues 22–120 constitute a propeptide that is removed on maturation; that stretch reads SCYPVGKSQK…TSEAATGPSG (99 aa). Residues 70–542 are disordered; the sequence is EEYLETNEVE…GPSGDDAMDI (473 aa). The segment covering 78–95 has biased composition (polar residues); sequence VESQASPNHGSSPANDAL. Residues 97–106 show a composition bias toward basic and acidic residues; that stretch reads SEEKLRRVSS. Residues 107 to 116 are compositionally biased toward low complexity; the sequence is DDAATSEAAT. Tandem repeats lie at residues 121 to 133, 134 to 146, 147 to 159, 160 to 172, 173 to 185, 186 to 198, 199 to 211, 212 to 224, 225 to 237, 238 to 250, 251 to 263, 264 to 276, 277 to 289, 290 to 302, 303 to 315, 316 to 328, 329 to 341, 342 to 354, 355 to 367, 368 to 380, 381 to 393, 394 to 406, 407 to 419, 420 to 432, 433 to 445, 446 to 458, 459 to 471, 472 to 484, 485 to 497, 498 to 510, 511 to 523, and 524 to 536. The interval 121–536 is 32 X 13 AA tandem repeats of D-D-A-T-S-E-A-A-T-G-P-S-G; sequence DDATSEAATG…TSEAATGPSG (416 aa). Residue Thr124 is glycosylated (O-linked (GalNAc...) threonine). Residue Ser125 is glycosylated (O-linked (GalNAc...) serine). O-linked (GalNAc...) threonine glycans are attached at residues Thr129 and Thr137. Ser138 carries an O-linked (GalNAc...) serine glycan. Residues Thr142 and Thr150 are each glycosylated (O-linked (GalNAc...) threonine). Ser151 carries O-linked (GalNAc...) serine glycosylation. O-linked (GalNAc...) threonine glycans are attached at residues Thr155 and Thr163. O-linked (GalNAc...) serine glycosylation is present at Ser164. O-linked (GalNAc...) threonine glycosylation is found at Thr168 and Thr176. O-linked (GalNAc...) serine glycosylation occurs at Ser177. Thr181 and Thr189 each carry an O-linked (GalNAc...) threonine glycan. The O-linked (GalNAc...) serine glycan is linked to Ser190. Thr194 and Thr202 each carry an O-linked (GalNAc...) threonine glycan. The O-linked (GalNAc...) serine glycan is linked to Ser203. O-linked (GalNAc...) threonine glycans are attached at residues Thr207 and Thr215. A glycan (O-linked (GalNAc...) serine) is linked at Ser216. 2 O-linked (GalNAc...) threonine glycosylation sites follow: Thr220 and Thr228. O-linked (GalNAc...) serine glycosylation is present at Ser229. Residues Thr233 and Thr241 are each glycosylated (O-linked (GalNAc...) threonine). Ser242 carries O-linked (GalNAc...) serine glycosylation. Thr246 and Thr254 each carry an O-linked (GalNAc...) threonine glycan. Residue Ser255 is glycosylated (O-linked (GalNAc...) serine). Thr259 and Thr267 each carry an O-linked (GalNAc...) threonine glycan. Ser268 carries an O-linked (GalNAc...) serine glycan. 2 O-linked (GalNAc...) threonine glycosylation sites follow: Thr272 and Thr280. O-linked (GalNAc...) serine glycosylation occurs at Ser281. O-linked (GalNAc...) threonine glycosylation is found at Thr285 and Thr293. Ser294 is a glycosylation site (O-linked (GalNAc...) serine). O-linked (GalNAc...) threonine glycosylation is found at Thr298 and Thr306. An O-linked (GalNAc...) serine glycan is attached at Ser307. O-linked (GalNAc...) threonine glycans are attached at residues Thr311 and Thr319. A glycan (O-linked (GalNAc...) serine) is linked at Ser320. Thr324 and Thr332 each carry an O-linked (GalNAc...) threonine glycan. O-linked (GalNAc...) serine glycosylation occurs at Ser333. 2 O-linked (GalNAc...) threonine glycosylation sites follow: Thr337 and Thr345. Ser346 carries an O-linked (GalNAc...) serine glycan. 2 O-linked (GalNAc...) threonine glycosylation sites follow: Thr350 and Thr358. Ser359 carries an O-linked (GalNAc...) serine glycan. Residues Thr363 and Thr371 are each glycosylated (O-linked (GalNAc...) threonine). Ser372 carries an O-linked (GalNAc...) serine glycan. Thr376 and Thr384 each carry an O-linked (GalNAc...) threonine glycan. A glycan (O-linked (GalNAc...) serine) is linked at Ser385. Residues Thr389 and Thr397 are each glycosylated (O-linked (GalNAc...) threonine). An O-linked (GalNAc...) serine glycan is attached at Ser398. 2 O-linked (GalNAc...) threonine glycosylation sites follow: Thr402 and Thr410. An O-linked (GalNAc...) serine glycan is attached at Ser411. O-linked (GalNAc...) threonine glycans are attached at residues Thr415 and Thr423. O-linked (GalNAc...) serine glycosylation occurs at Ser424. 2 O-linked (GalNAc...) threonine glycosylation sites follow: Thr428 and Thr436. A glycan (O-linked (GalNAc...) serine) is linked at Ser437. 2 O-linked (GalNAc...) threonine glycosylation sites follow: Thr441 and Thr449. Ser450 carries an O-linked (GalNAc...) serine glycan. O-linked (GalNAc...) threonine glycans are attached at residues Thr454 and Thr462. O-linked (GalNAc...) serine glycosylation is present at Ser463. 2 O-linked (GalNAc...) threonine glycosylation sites follow: Thr467 and Thr475. Ser476 carries an O-linked (GalNAc...) serine glycan. O-linked (GalNAc...) threonine glycans are attached at residues Thr480 and Thr488. Ser489 carries an O-linked (GalNAc...) serine glycan. O-linked (GalNAc...) threonine glycosylation is found at Thr493 and Thr501. Ser502 is a glycosylation site (O-linked (GalNAc...) serine). O-linked (GalNAc...) threonine glycans are attached at residues Thr506 and Thr514. Ser515 is a glycosylation site (O-linked (GalNAc...) serine). Thr519 and Thr527 each carry an O-linked (GalNAc...) threonine glycan. Residue Ser528 is glycosylated (O-linked (GalNAc...) serine). The O-linked (GalNAc...) threonine glycan is linked to Thr532. Positions 537-542 are excised as a propeptide; it reads DDAMDI.

Most sialic acid residues exist in the form of polysialyl groups partly capped with deaminoneuraminic acid. Cortical alveoli of immature ovaries.

Its function is as follows. In response to egg activation, PSGP is discharged by exocytosis into the perivitelline space, where it undergoes rapid proteolysis into glycotridecapeptides. During fertilization and/or early development the glycotridecapeptides prevent polyspermy or are involved in the formation of a fertilization membrane. The protein is Polysialoglycoprotein of Oncorhynchus mykiss (Rainbow trout).